Here is a 457-residue protein sequence, read N- to C-terminus: Cysteine--tRNA ligase (457 aa).

C27 is a binding site for Zn(2+). The 'HIGH' region signature appears at 29–39 (PTVYDFAHIGN). C211, H236, and E240 together coordinate Zn(2+). Residues 269–273 (KMSKS) carry the 'KMSKS' region motif. K272 is a binding site for ATP.

This sequence belongs to the class-I aminoacyl-tRNA synthetase family. In terms of assembly, monomer. Zn(2+) serves as cofactor.

The protein resides in the cytoplasm. It catalyses the reaction tRNA(Cys) + L-cysteine + ATP = L-cysteinyl-tRNA(Cys) + AMP + diphosphate. The protein is Cysteine--tRNA ligase of Ehrlichia ruminantium (strain Gardel).